The sequence spans 29 residues: Cytochrome b6-f complex subunit 8 (29 aa).

The helical transmembrane segment at 3–23 (ITSIAWGALMVVFTFSLSLVV) threads the bilayer.

Belongs to the PetN family. In terms of assembly, the 4 large subunits of the cytochrome b6-f complex are cytochrome b6, subunit IV (17 kDa polypeptide, PetD), cytochrome f and the Rieske protein, while the 4 small subunits are PetG, PetL, PetM and PetN. The complex functions as a dimer.

It is found in the plastid membrane. Component of the cytochrome b6-f complex, which mediates electron transfer between photosystem II (PSII) and photosystem I (PSI), cyclic electron flow around PSI, and state transitions. The chain is Cytochrome b6-f complex subunit 8 from Aneura mirabilis (Parasitic liverwort).